Reading from the N-terminus, the 540-residue chain is Glucose-6-phosphate isomerase (540 aa).

The active-site Proton donor is Glu-351. Active-site residues include His-382 and Lys-506.

Belongs to the GPI family.

It is found in the cytoplasm. The enzyme catalyses alpha-D-glucose 6-phosphate = beta-D-fructose 6-phosphate. The protein operates within carbohydrate biosynthesis; gluconeogenesis. It functions in the pathway carbohydrate degradation; glycolysis; D-glyceraldehyde 3-phosphate and glycerone phosphate from D-glucose: step 2/4. Its function is as follows. Catalyzes the reversible isomerization of glucose-6-phosphate to fructose-6-phosphate. This chain is Glucose-6-phosphate isomerase, found in Corynebacterium glutamicum (strain R).